Reading from the N-terminus, the 214-residue chain is Glycine-rich protein 2 (214 aa).

Residues 8 to 75 (RAKGTVKWFS…RTKAVDVTGP (68 aa)) form the CSD domain. Positions 54–91 (TVEFEVESGGDGRTKAVDVTGPDGAAVQGGRGGGGGGG) are disordered. The span at 80–91 (VQGGRGGGGGGG) shows a compositional bias: gly residues. 2 consecutive CCHC-type zinc fingers follow at residues 157–174 (SGCFKCGESGHFARDCSQ) and 194–211 (GGCYKCGEDGHFARECTS).

The sequence is that of Glycine-rich protein 2 (GRP-2) from Nicotiana sylvestris (Wood tobacco).